The sequence spans 230 residues: Putative 14-3-3-like protein GF14-H (230 aa).

The protein belongs to the 14-3-3 family.

Is associated with a DNA binding complex that binds to the G box, a well-characterized cis-acting DNA regulatory element found in plant genes. The sequence is that of Putative 14-3-3-like protein GF14-H (GF14H) from Oryza sativa subsp. japonica (Rice).